We begin with the raw amino-acid sequence, 612 residues long: Probable Xaa-Pro aminopeptidase P (612 aa).

Aspartate 409, aspartate 420, glutamate 518, and glutamate 532 together coordinate Mn(2+).

This sequence belongs to the peptidase M24B family. Mn(2+) is required as a cofactor.

It catalyses the reaction Release of any N-terminal amino acid, including proline, that is linked to proline, even from a dipeptide or tripeptide.. Its function is as follows. Catalyzes the removal of a penultimate prolyl residue from the N-termini of peptides. This Verticillium alfalfae (strain VaMs.102 / ATCC MYA-4576 / FGSC 10136) (Verticillium wilt of alfalfa) protein is Probable Xaa-Pro aminopeptidase P (AMPP).